A 231-amino-acid polypeptide reads, in one-letter code: Trypsin-2 (231 aa).

A signal peptide spans 1–4; that stretch reads AAFA. Positions 5 to 9 are cleaved as a propeptide — activation peptide; sequence TEDDK. The 220-residue stretch at 10–229 folds into the Peptidase S1 domain; it reads IVGGYECKAY…FNDWLTSTMA (220 aa). Cystine bridges form between Cys-16–Cys-145, Cys-34–Cys-50, Cys-118–Cys-218, Cys-125–Cys-191, Cys-156–Cys-170, and Cys-181–Cys-205. The active-site Charge relay system is His-49. Positions 61, 63, 66, and 71 each coordinate Ca(2+). Residue Asp-93 is the Charge relay system of the active site. The Charge relay system role is filled by Ser-185.

The protein belongs to the peptidase S1 family. Requires Ca(2+) as cofactor.

Its subcellular location is the secreted. It is found in the extracellular space. It catalyses the reaction Preferential cleavage: Arg-|-Xaa, Lys-|-Xaa.. The sequence is that of Trypsin-2 from Salmo salar (Atlantic salmon).